The following is a 132-amino-acid chain: Profilin-1 (132 aa).

This sequence belongs to the profilin family. Occurs in many kinds of cells as a complex with monomeric actin in a 1:1 ratio. Expressed in the nerve ring during late embryonic stages. In adults, expression is seen in the neurons, vulva and somatic gonad.

The protein resides in the cytoplasm. Its subcellular location is the cytoskeleton. Its function is as follows. Binds to actin and affects the structure of the cytoskeleton. At high concentrations, profilin prevents the polymerization of actin, whereas it enhances it at low concentrations. By binding to PIP2, it inhibits the formation of IP3 and DG. Also binds to poly(L-proline) and phosphatidylinositol 4,5-bisphosphate micelles. In Caenorhabditis elegans, this protein is Profilin-1 (pfn-1).